Reading from the N-terminus, the 201-residue chain is Holliday junction branch migration complex subunit RuvA (201 aa).

The tract at residues 1–63 (MYAYIKGKLS…EDAQLLYGFM (63 aa)) is domain I. Positions 64 to 142 (SEEEKGMFLS…ITEENPETLL (79 aa)) are domain II. Residues 143 to 153 (NFEGSESNQTS) form a flexible linker region. The segment at 153 to 201 (SPILDEALLALEALGYSKRELNKVEKKLQAESYTSVDEAVKAGLKILVS) is domain III.

The protein belongs to the RuvA family. In terms of assembly, homotetramer. Forms an RuvA(8)-RuvB(12)-Holliday junction (HJ) complex. HJ DNA is sandwiched between 2 RuvA tetramers; dsDNA enters through RuvA and exits via RuvB. An RuvB hexamer assembles on each DNA strand where it exits the tetramer. Each RuvB hexamer is contacted by two RuvA subunits (via domain III) on 2 adjacent RuvB subunits; this complex drives branch migration. In the full resolvosome a probable DNA-RuvA(4)-RuvB(12)-RuvC(2) complex forms which resolves the HJ.

Its subcellular location is the cytoplasm. In terms of biological role, the RuvA-RuvB-RuvC complex processes Holliday junction (HJ) DNA during genetic recombination and DNA repair, while the RuvA-RuvB complex plays an important role in the rescue of blocked DNA replication forks via replication fork reversal (RFR). RuvA specifically binds to HJ cruciform DNA, conferring on it an open structure. The RuvB hexamer acts as an ATP-dependent pump, pulling dsDNA into and through the RuvAB complex. HJ branch migration allows RuvC to scan DNA until it finds its consensus sequence, where it cleaves and resolves the cruciform DNA. This chain is Holliday junction branch migration complex subunit RuvA, found in Staphylococcus carnosus (strain TM300).